The primary structure comprises 365 residues: tRNA-specific 2-thiouridylase MnmA (365 aa).

Residues 14–21 (AMSGGVDS) and Leu-40 contribute to the ATP site. Cys-108 serves as the catalytic Nucleophile. A disulfide bridge connects residues Cys-108 and Cys-204. Gly-132 is an ATP binding site. Positions 154-156 (KDQ) are interaction with tRNA. The active-site Cysteine persulfide intermediate is Cys-204.

It belongs to the MnmA/TRMU family.

The protein localises to the cytoplasm. It carries out the reaction S-sulfanyl-L-cysteinyl-[protein] + uridine(34) in tRNA + AH2 + ATP = 2-thiouridine(34) in tRNA + L-cysteinyl-[protein] + A + AMP + diphosphate + H(+). Its function is as follows. Catalyzes the 2-thiolation of uridine at the wobble position (U34) of tRNA, leading to the formation of s(2)U34. This is tRNA-specific 2-thiouridylase MnmA from Rickettsia peacockii (strain Rustic).